A 315-amino-acid chain; its full sequence is Deoxyribonuclease-1-like 1 (315 aa).

The first 29 residues, 1–29, serve as a signal peptide directing secretion; that stretch reads MDSSGGFQKHTCGHALLLLLLLLAGGAEA. Catalysis depends on residues E108 and H159. A disulfide bridge links C198 with C235. N-linked (GlcNAc...) asparagine glycosylation occurs at N272.

Belongs to the DNase I family.

The protein resides in the endoplasmic reticulum. In Sus scrofa (Pig), this protein is Deoxyribonuclease-1-like 1 (DNASE1L1).